The following is a 223-amino-acid chain: MNSIWARLRLASSQLPIGGYSYSQGLEAALDNGWVRDAESARTWLVDQLQLNLARFEAPLLAGLLRAALIGDWAACDAASERHRASRETRELAQESRQMGFSLHQLLEALPELDAPGRAWLARQDPPNLAAAWAMAARAWRLDAEEALSAWFWSWLENQLAVLMKTLPLGQLAAQKLASSLLPELDRACAEALRRPAVEGSAAFGLALASMTHETQYSRLFRS.

The protein belongs to the UreF family. As to quaternary structure, ureD, UreF and UreG form a complex that acts as a GTP-hydrolysis-dependent molecular chaperone, activating the urease apoprotein by helping to assemble the nickel containing metallocenter of UreC. The UreE protein probably delivers the nickel.

It is found in the cytoplasm. Functionally, required for maturation of urease via the functional incorporation of the urease nickel metallocenter. This chain is Urease accessory protein UreF, found in Pseudomonas aeruginosa (strain LESB58).